The primary structure comprises 119 residues: Large ribosomal subunit protein bL20 (119 aa).

It belongs to the bacterial ribosomal protein bL20 family.

Functionally, binds directly to 23S ribosomal RNA and is necessary for the in vitro assembly process of the 50S ribosomal subunit. It is not involved in the protein synthesizing functions of that subunit. The chain is Large ribosomal subunit protein bL20 from Nitrobacter hamburgensis (strain DSM 10229 / NCIMB 13809 / X14).